The following is a 586-amino-acid chain: Probable riboflavin import ATP-binding protein RfuB (586 aa).

2 consecutive ABC transporter domains span residues 46–299 and 343–586; these read RAVD…NECI and LRVE…DSHT. Residue 89-96 coordinates ATP; sequence GKNGAGKS.

The protein belongs to the ABC transporter superfamily. The complex is probably composed of two ATP-binding proteins (RfuB), two transmembrane proteins (RfuC and RfuD) and a solute-binding protein (RfuA).

The protein localises to the cell inner membrane. Probably part of the ABC transporter complex RfuABCD involved in riboflavin import. Probably responsible for energy coupling to the transport system. The protein is Probable riboflavin import ATP-binding protein RfuB of Treponema pallidum (strain Nichols).